A 60-amino-acid polypeptide reads, in one-letter code: MSAIAPITGSLKKRIMKDIAVGMGLGTVLGSYWWWGFHKPKIAARENYYTQLAEQKAAEE.

Residues 1-18 (MSAIAPITGSLKKRIMKD) are Mitochondrial matrix-facing. A helical transmembrane segment spans residues 19–37 (IAVGMGLGTVLGSYWWWGF). Residues 38–57 (HKPKIAARENYYTQLAEQKA) lie on the Mitochondrial intermembrane side of the membrane. The propeptide at 58–60 (AEE) is removed in mature form.

The protein belongs to the fungal cytochrome c oxidase subunit 7a family. Component of the cytochrome c oxidase (complex IV, CIV), a multisubunit enzyme composed of a catalytic core of 3 subunits and several supernumerary subunits. The complex exists as a monomer or a dimer and forms supercomplexes (SCs) in the inner mitochondrial membrane with ubiquinol-cytochrome c oxidoreductase (cytochrome b-c1 complex, complex III, CIII).

It is found in the mitochondrion inner membrane. It functions in the pathway energy metabolism; oxidative phosphorylation. Functionally, component of the cytochrome c oxidase, the last enzyme in the mitochondrial electron transport chain which drives oxidative phosphorylation. The respiratory chain contains 3 multisubunit complexes succinate dehydrogenase (complex II, CII), ubiquinol-cytochrome c oxidoreductase (cytochrome b-c1 complex, complex III, CIII) and cytochrome c oxidase (complex IV, CIV), that cooperate to transfer electrons derived from NADH and succinate to molecular oxygen, creating an electrochemical gradient over the inner membrane that drives transmembrane transport and the ATP synthase. Cytochrome c oxidase is the component of the respiratory chain that catalyzes the reduction of oxygen to water. Electrons originating from reduced cytochrome c in the intermembrane space (IMS) are transferred via the dinuclear copper A center (CU(A)) of subunit 2 and heme A of subunit 1 to the active site in subunit 1, a binuclear center (BNC) formed by heme A3 and copper B (CU(B)). The BNC reduces molecular oxygen to 2 water molecules using 4 electrons from cytochrome c in the IMS and 4 protons from the mitochondrial matrix. In Eremothecium gossypii (strain ATCC 10895 / CBS 109.51 / FGSC 9923 / NRRL Y-1056) (Yeast), this protein is Cytochrome c oxidase subunit 9, mitochondrial (COX9).